Reading from the N-terminus, the 359-residue chain is Histidinol-phosphate aminotransferase (359 aa).

At lysine 220 the chain carries N6-(pyridoxal phosphate)lysine.

The protein belongs to the class-II pyridoxal-phosphate-dependent aminotransferase family. Histidinol-phosphate aminotransferase subfamily. In terms of assembly, homodimer. It depends on pyridoxal 5'-phosphate as a cofactor.

It catalyses the reaction L-histidinol phosphate + 2-oxoglutarate = 3-(imidazol-4-yl)-2-oxopropyl phosphate + L-glutamate. Its pathway is amino-acid biosynthesis; L-histidine biosynthesis; L-histidine from 5-phospho-alpha-D-ribose 1-diphosphate: step 7/9. This Neisseria gonorrhoeae (strain ATCC 700825 / FA 1090) protein is Histidinol-phosphate aminotransferase.